The following is a 276-amino-acid chain: MAIKHYKPITNGRRNMTGSDFAEITSTSPEKSLLAPLPRKAGRNNQGKLTVRHRGGGHKRQYRIIDFKRNKDGIPAKVATIEYDPNRSANIALLHYLDGEKRYIIAPKGLTVGTQVVNGPEADIKVGNCLPLQNIPVGTVIHNIELKPGKGGQLVRSAGASAQVLGKEGKYVLVRLKSGEVRMILSTCRATIGQVGNEQHELINIGKAGRSRWKGIRPTVRGSVMNPNDHPHGGGEGRTSIGRPSPMSPWGKPTLGKKTRKKKNRSNKLIVRGRKK.

Disordered stretches follow at residues 36 to 55 (PLPRKAGRNNQGKLTVRHRG) and 219 to 276 (TVRG…GRKK). The segment covering 255–276 (LGKKTRKKKNRSNKLIVRGRKK) has biased composition (basic residues).

The protein belongs to the universal ribosomal protein uL2 family. In terms of assembly, part of the 50S ribosomal subunit. Forms a bridge to the 30S subunit in the 70S ribosome.

Functionally, one of the primary rRNA binding proteins. Required for association of the 30S and 50S subunits to form the 70S ribosome, for tRNA binding and peptide bond formation. It has been suggested to have peptidyltransferase activity; this is somewhat controversial. Makes several contacts with the 16S rRNA in the 70S ribosome. This chain is Large ribosomal subunit protein uL2, found in Macrococcus caseolyticus (strain JCSC5402) (Macrococcoides caseolyticum).